We begin with the raw amino-acid sequence, 353 residues long: UDP-N-acetylglucosamine--N-acetylmuramyl-(pentapeptide) pyrophosphoryl-undecaprenol N-acetylglucosamine transferase (353 aa).

UDP-N-acetyl-alpha-D-glucosamine-binding positions include 10 to 12 (TGG), N124, S183, and Q283.

It belongs to the glycosyltransferase 28 family. MurG subfamily.

The protein resides in the cell inner membrane. It carries out the reaction di-trans,octa-cis-undecaprenyl diphospho-N-acetyl-alpha-D-muramoyl-L-alanyl-D-glutamyl-meso-2,6-diaminopimeloyl-D-alanyl-D-alanine + UDP-N-acetyl-alpha-D-glucosamine = di-trans,octa-cis-undecaprenyl diphospho-[N-acetyl-alpha-D-glucosaminyl-(1-&gt;4)]-N-acetyl-alpha-D-muramoyl-L-alanyl-D-glutamyl-meso-2,6-diaminopimeloyl-D-alanyl-D-alanine + UDP + H(+). The protein operates within cell wall biogenesis; peptidoglycan biosynthesis. Functionally, cell wall formation. Catalyzes the transfer of a GlcNAc subunit on undecaprenyl-pyrophosphoryl-MurNAc-pentapeptide (lipid intermediate I) to form undecaprenyl-pyrophosphoryl-MurNAc-(pentapeptide)GlcNAc (lipid intermediate II). This Helicobacter pylori (strain J99 / ATCC 700824) (Campylobacter pylori J99) protein is UDP-N-acetylglucosamine--N-acetylmuramyl-(pentapeptide) pyrophosphoryl-undecaprenol N-acetylglucosamine transferase.